The sequence spans 731 residues: Alpha-xylosidase (731 aa).

Active-site residues include D353 and E356. D428 (proton donor) is an active-site residue.

This sequence belongs to the glycosyl hydrolase 31 family. Monomer.

It catalyses the reaction Hydrolysis of terminal, non-reducing alpha-D-xylose residues with release of alpha-D-xylose.. Its function is as follows. Catalyzes the liberation of alpha-xylose from the non-reducing terminal glucose of xyloglucan oligosaccharides. Has high hydrolytic activity on the disaccharide isoprimeverose. Follows a retaining mechanism of substrate hydrolysis. The polypeptide is Alpha-xylosidase (xylS) (Saccharolobus solfataricus (strain ATCC 35092 / DSM 1617 / JCM 11322 / P2) (Sulfolobus solfataricus)).